The following is a 103-amino-acid chain: Co-chaperonin GroES (103 aa).

Belongs to the GroES chaperonin family. In terms of assembly, heptamer of 7 subunits arranged in a ring. Interacts with the chaperonin GroEL.

The protein localises to the cytoplasm. In terms of biological role, together with the chaperonin GroEL, plays an essential role in assisting protein folding. The GroEL-GroES system forms a nano-cage that allows encapsulation of the non-native substrate proteins and provides a physical environment optimized to promote and accelerate protein folding. GroES binds to the apical surface of the GroEL ring, thereby capping the opening of the GroEL channel. This chain is Co-chaperonin GroES, found in Prochlorococcus marinus (strain MIT 9515).